The following is a 119-amino-acid chain: Ribonuclease P protein component (119 aa).

It belongs to the RnpA family. In terms of assembly, consists of a catalytic RNA component (M1 or rnpB) and a protein subunit.

It catalyses the reaction Endonucleolytic cleavage of RNA, removing 5'-extranucleotides from tRNA precursor.. Its function is as follows. RNaseP catalyzes the removal of the 5'-leader sequence from pre-tRNA to produce the mature 5'-terminus. It can also cleave other RNA substrates such as 4.5S RNA. The protein component plays an auxiliary but essential role in vivo by binding to the 5'-leader sequence and broadening the substrate specificity of the ribozyme. In Edwardsiella ictaluri (strain 93-146), this protein is Ribonuclease P protein component.